Consider the following 435-residue polypeptide: Xylose isomerase (435 aa).

Residues His-100 and Asp-103 contribute to the active site. 7 residues coordinate Mg(2+): Glu-231, Glu-267, His-270, Asp-295, Asp-306, Asp-308, and Asp-338.

Belongs to the xylose isomerase family. In terms of assembly, homotetramer. Requires Mg(2+) as cofactor.

The protein resides in the cytoplasm. The catalysed reaction is alpha-D-xylose = alpha-D-xylulofuranose. The polypeptide is Xylose isomerase (Brucella canis (strain ATCC 23365 / NCTC 10854 / RM-666)).